The sequence spans 255 residues: 1-(5-phosphoribosyl)-5-[(5-phosphoribosylamino)methylideneamino] imidazole-4-carboxamide isomerase (255 aa).

Residue aspartate 8 is the Proton acceptor of the active site. Aspartate 129 serves as the catalytic Proton donor.

This sequence belongs to the HisA/HisF family.

The protein localises to the cytoplasm. The catalysed reaction is 1-(5-phospho-beta-D-ribosyl)-5-[(5-phospho-beta-D-ribosylamino)methylideneamino]imidazole-4-carboxamide = 5-[(5-phospho-1-deoxy-D-ribulos-1-ylimino)methylamino]-1-(5-phospho-beta-D-ribosyl)imidazole-4-carboxamide. It participates in amino-acid biosynthesis; L-histidine biosynthesis; L-histidine from 5-phospho-alpha-D-ribose 1-diphosphate: step 4/9. This is 1-(5-phosphoribosyl)-5-[(5-phosphoribosylamino)methylideneamino] imidazole-4-carboxamide isomerase from Synechococcus sp. (strain CC9902).